Consider the following 309-residue polypeptide: NmrA-like family domain-containing protein 1 (309 aa).

Residues 11 to 16, 37 to 41, 58 to 59, 79 to 81, Lys102, Lys143, and 165 to 168 contribute to the NADP(+) site; these read GATGAQ, RNPEQ, DQ, TNY, and YFEN. The segment at 163-199 is interaction with ASS1; it reads PCYFENLLSYFLPQKAADGKSFLLDLPMGDVPMDGMS.

This sequence belongs to the NmrA-type oxidoreductase family. Homodimer. Interacts with ASS1. Interaction is enhanced by low NADPH/NADP(+) ratios, which results in inhibition of ASS1 activity.

It localises to the cytoplasm. It is found in the perinuclear region. Its subcellular location is the nucleus. In terms of biological role, redox sensor protein. Undergoes restructuring and subcellular redistribution in response to changes in intracellular NADPH/NADP(+) levels. At low NADPH concentrations the protein is found mainly as a monomer, and binds argininosuccinate synthase (ASS1), the enzyme involved in nitric oxide synthesis. Association with ASS1 impairs its activity and reduces the production of nitric oxide, which subsecuently prevents apoptosis. Under normal NADPH concentrations, the protein is found as a dimer and hides the binding site for ASS1. The homodimer binds one molecule of NADPH. Has higher affinity for NADPH than for NADP(+). Binding to NADPH is necessary to form a stable dimer. The sequence is that of NmrA-like family domain-containing protein 1 (Nmral1) from Mus musculus (Mouse).